We begin with the raw amino-acid sequence, 212 residues long: MSSARRRALGFSFQALLLCAAGWHGAAQADGVSALRDFVQNVQSGRATFNQTVTSPDGAKKKTSTGSFEFLRPNRFRFDYTKPYEQQIVADGVKVWLHDVDLNQVTVRPFDQALGSTPAALLAGASIERDFTLANLPEEAGLQWVQALPKAREGSIRSLRVAFRGKDLAAFEITDAFGQRSRLDFNRFEGNAAVPAARFKFVAPAGADVLQQ.

A signal peptide spans 1-29; the sequence is MSSARRRALGFSFQALLLCAAGWHGAAQA.

It belongs to the LolA family. As to quaternary structure, monomer.

It is found in the periplasm. Functionally, participates in the translocation of lipoproteins from the inner membrane to the outer membrane. Only forms a complex with a lipoprotein if the residue after the N-terminal Cys is not an aspartate (The Asp acts as a targeting signal to indicate that the lipoprotein should stay in the inner membrane). In Leptothrix cholodnii (strain ATCC 51168 / LMG 8142 / SP-6) (Leptothrix discophora (strain SP-6)), this protein is Outer-membrane lipoprotein carrier protein.